We begin with the raw amino-acid sequence, 151 residues long: Caveolin-3 (151 aa).

The Cytoplasmic portion of the chain corresponds to Met1 to Pro83. Residue Lys38 forms a Glycyl lysine isopeptide (Lys-Gly) (interchain with G-Cter in SUMO3) linkage. Residues Thr64–Ile114 are required for interaction with DAG1. The helical intramembrane region spans Leu84–Val104. Topologically, residues Pro105–Gly151 are cytoplasmic.

This sequence belongs to the caveolin family. As to quaternary structure, homooligomer. Interacts with DYSF. Interacts with DLG1 and KCNA5; forms a ternary complex. Interacts with DAG1 (via its C-terminal); the interaction prevents binding of DAG1 with DMD. Interacts with TRIM72. Interacts with MUSK; may regulate MUSK signaling. Interacts with POPDC1. Interacts with CAVIN1, CAVIN2 and CAVIN4. Sumoylation with SUMO3 by PIAS4 may reduce agonist-induced internalization and desensitization of adrenergic receptor ABRD2. Expressed predominantly in muscle.

The protein resides in the golgi apparatus membrane. The protein localises to the cell membrane. Its subcellular location is the membrane. It is found in the caveola. It localises to the sarcolemma. In terms of biological role, may act as a scaffolding protein within caveolar membranes. Interacts directly with G-protein alpha subunits and can functionally regulate their activity. May also regulate voltage-gated potassium channels. Plays a role in the sarcolemma repair mechanism of both skeletal muscle and cardiomyocytes that permits rapid resealing of membranes disrupted by mechanical stress. Mediates the recruitment of CAVIN2 and CAVIN3 proteins to the caveolae. This chain is Caveolin-3, found in Mus musculus (Mouse).